Here is a 254-residue protein sequence, read N- to C-terminus: MIIVISPAKSQNFEPIKTAYQFTQPIFKQQIIKLINTLKHYEVEEIEKLMKISPKLAEEVFAKHNSFNPNKYDNSNAKAAIFTFSGDVYKGLEADTLDNKTIEYAQNHLLMLSGLYGLVRPLDLIQAYRLEMGTNIKIDGKILHKYWQDKITTQLNEYFSQQQNKILINLASNEYSQAIDKKSLAVKWLDIDFKENKAGAYKTIGIHAKKARGLITRYILENRIENVSDIKKFNVAGYQFNPDFSDENLLCFTR.

Belongs to the UPF0246 family.

This Francisella tularensis subsp. mediasiatica (strain FSC147) protein is UPF0246 protein FTM_0239.